We begin with the raw amino-acid sequence, 114 residues long: Large ribosomal subunit protein bL19 (114 aa).

It belongs to the bacterial ribosomal protein bL19 family.

Functionally, this protein is located at the 30S-50S ribosomal subunit interface and may play a role in the structure and function of the aminoacyl-tRNA binding site. This Clostridium botulinum (strain ATCC 19397 / Type A) protein is Large ribosomal subunit protein bL19.